The following is a 562-amino-acid chain: Alpha-1D adrenergic receptor (562 aa).

Topologically, residues 1–90 are extracellular; it reads MTFRDILSVT…VGGLVVSAQG (90 aa). Disordered regions lie at residues 13 to 44 and 50 to 69; these read GPRA…GVPG and AVVG…EAGA. A compositionally biased stretch (gly residues) spans 21 to 44; the sequence is GGSGAGGGAGTVGPEGPAVGGVPG. Asn60 and Asn76 each carry an N-linked (GlcNAc...) asparagine glycan. Residues 91–115 traverse the membrane as a helical segment; that stretch reads VGVGVFLAAFILTAVAGNLLVILSV. Residues 116–127 lie on the Cytoplasmic side of the membrane; the sequence is ACNRHLQTVTNY. The helical transmembrane segment at 128–153 threads the bilayer; it reads FIVNLAVADLLLSAAVLPFSATMEVL. Over 154–163 the chain is Extracellular; sequence GFWPFGRTFC. A helical membrane pass occupies residues 164-186; the sequence is DVWAAVDVLCCTASILSLCTISV. Residues 187 to 207 lie on the Cytoplasmic side of the membrane; that stretch reads DRYVGVRHSLKYPAIMTERKA. A helical transmembrane segment spans residues 208 to 232; it reads AAILALLWAVALVVSVGPLLGWKEP. Topologically, residues 233–245 are extracellular; that stretch reads VPPDERFCGITEE. The helical transmembrane segment at 246–269 threads the bilayer; it reads VGYAIFSSVCSFYLPMAVIVVMYC. Topologically, residues 270–342 are cytoplasmic; that stretch reads RVYVVARSTT…KFSREKKAAK (73 aa). Residues 343 to 367 form a helical membrane-spanning segment; that stretch reads TLAIVVGVFVLCWFPFFFVLPLGSL. Topologically, residues 368–374 are extracellular; that stretch reads FPQLKPS. Residues 375 to 399 form a helical membrane-spanning segment; it reads EGVFKVIFWLGYFNSCVNPLIYPCS. Residues 400 to 562 are Cytoplasmic-facing; that stretch reads SREFKRAFLR…DLSNLRETDI (163 aa). Cys413 is lipidated: S-palmitoyl cysteine. The segment at 444–472 is disordered; it reads QPAHRTPRGSPSPHCTPRPGLRRHAGGAG.

It belongs to the G-protein coupled receptor 1 family. Adrenergic receptor subfamily. ADRA1D sub-subfamily. Interacts with FLNA (via filamin repeat 21); increases PKA-mediated phosphorylation of FLNA. Post-translationally, palmitoylated. Palmitoylation by ZDHHC21 may increase the expression of the receptor and regulate downstream signaling.

The protein resides in the cell membrane. This alpha-adrenergic receptor mediates its effect through the influx of extracellular calcium. This chain is Alpha-1D adrenergic receptor (Adra1d), found in Mus musculus (Mouse).